Reading from the N-terminus, the 354-residue chain is Protein RecA (354 aa).

67–74 (GPESSGKT) contacts ATP. The tract at residues 331-354 (NQDSTPDFSVDDNGEGVKETNEDF) is disordered. Residues 345-354 (EGVKETNEDF) are compositionally biased toward basic and acidic residues.

The protein belongs to the RecA family.

The protein resides in the cytoplasm. Can catalyze the hydrolysis of ATP in the presence of single-stranded DNA, the ATP-dependent uptake of single-stranded DNA by duplex DNA, and the ATP-dependent hybridization of homologous single-stranded DNAs. It interacts with LexA causing its activation and leading to its autocatalytic cleavage. This is Protein RecA from Citrobacter koseri (strain ATCC BAA-895 / CDC 4225-83 / SGSC4696).